Consider the following 258-residue polypeptide: Thiazole synthase (258 aa).

Lys100 functions as the Schiff-base intermediate with DXP in the catalytic mechanism. 1-deoxy-D-xylulose 5-phosphate is bound by residues Gly161, 187–188 (AG), and 209–210 (NT).

It belongs to the ThiG family. In terms of assembly, homotetramer. Forms heterodimers with either ThiH or ThiS.

The protein localises to the cytoplasm. The enzyme catalyses [ThiS sulfur-carrier protein]-C-terminal-Gly-aminoethanethioate + 2-iminoacetate + 1-deoxy-D-xylulose 5-phosphate = [ThiS sulfur-carrier protein]-C-terminal Gly-Gly + 2-[(2R,5Z)-2-carboxy-4-methylthiazol-5(2H)-ylidene]ethyl phosphate + 2 H2O + H(+). Its pathway is cofactor biosynthesis; thiamine diphosphate biosynthesis. Functionally, catalyzes the rearrangement of 1-deoxy-D-xylulose 5-phosphate (DXP) to produce the thiazole phosphate moiety of thiamine. Sulfur is provided by the thiocarboxylate moiety of the carrier protein ThiS. In vitro, sulfur can be provided by H(2)S. This is Thiazole synthase from Campylobacter jejuni subsp. jejuni serotype O:23/36 (strain 81-176).